Here is a 228-residue protein sequence, read N- to C-terminus: uncharacterized protein (228 aa).

Positions 196-228 form a coiled coil; the sequence is VKITELLDKAKISINDLNKTIEKLNETVNKYHG.

This is an uncharacterized protein from Acanthamoeba polyphaga (Amoeba).